A 207-amino-acid chain; its full sequence is Small ribosomal subunit protein uS2 (207 aa).

The protein belongs to the universal ribosomal protein uS2 family.

This chain is Small ribosomal subunit protein uS2, found in Nitrosopumilus maritimus (strain SCM1).